The following is a 159-amino-acid chain: SsrA-binding protein (159 aa).

This sequence belongs to the SmpB family.

The protein resides in the cytoplasm. In terms of biological role, required for rescue of stalled ribosomes mediated by trans-translation. Binds to transfer-messenger RNA (tmRNA), required for stable association of tmRNA with ribosomes. tmRNA and SmpB together mimic tRNA shape, replacing the anticodon stem-loop with SmpB. tmRNA is encoded by the ssrA gene; the 2 termini fold to resemble tRNA(Ala) and it encodes a 'tag peptide', a short internal open reading frame. During trans-translation Ala-aminoacylated tmRNA acts like a tRNA, entering the A-site of stalled ribosomes, displacing the stalled mRNA. The ribosome then switches to translate the ORF on the tmRNA; the nascent peptide is terminated with the 'tag peptide' encoded by the tmRNA and targeted for degradation. The ribosome is freed to recommence translation, which seems to be the essential function of trans-translation. The chain is SsrA-binding protein from Dichelobacter nodosus (strain VCS1703A).